The sequence spans 128 residues: Gas vesicle protein O (128 aa).

The interval 1 to 49 (MANTPEDTQNTQNDSQNDSQNDSQKDTSARATSARAHQQPQEQPPSPMR) is disordered. Positions 7 to 22 (DTQNTQNDSQNDSQND) are enriched in low complexity. Positions 29–41 (ARATSARAHQQPQ) are enriched in polar residues.

The protein belongs to the gas vesicle GvpO family.

The protein localises to the gas vesicle. In terms of biological role, a minor component of the gas vesicle. May play a role in transcription and/or RNA stability and in GV assembly. Gas vesicles are hollow, gas filled proteinaceous nanostructures found in some microorganisms. It is not clear what function gas vesicles perform in soil bacteria. The polypeptide is Gas vesicle protein O (Streptomyces sp. (strain CB03234)).